The following is a 320-amino-acid chain: Malate dehydrogenase (320 aa).

NAD(+) contacts are provided by residues 10 to 15 and aspartate 34; that span reads GSGMIG. Substrate is bound by residues arginine 83 and arginine 89. NAD(+)-binding positions include asparagine 96 and 119 to 121; that span reads ITN. The substrate site is built by asparagine 121 and arginine 152. Histidine 176 functions as the Proton acceptor in the catalytic mechanism.

It belongs to the LDH/MDH superfamily. MDH type 3 family.

The catalysed reaction is (S)-malate + NAD(+) = oxaloacetate + NADH + H(+). Its function is as follows. Catalyzes the reversible oxidation of malate to oxaloacetate. The protein is Malate dehydrogenase of Brucella anthropi (strain ATCC 49188 / DSM 6882 / CCUG 24695 / JCM 21032 / LMG 3331 / NBRC 15819 / NCTC 12168 / Alc 37) (Ochrobactrum anthropi).